The following is a 241-amino-acid chain: Dihydropteridine reductase (241 aa).

11–35 (LVYGGRGALGSRCVQAFRARNWWVA) contributes to the NADP(+) binding site. N6-succinyllysine is present on residues K70, K76, K93, and K99. Y147 functions as the Proton acceptor in the catalytic mechanism. S170 bears the Phosphoserine mark.

It belongs to the short-chain dehydrogenases/reductases (SDR) family. Homodimer.

It carries out the reaction 5,6,7,8-tetrahydropteridine + NAD(+) = 6,7-dihydropteridine + NADH + H(+). The enzyme catalyses 5,6,7,8-tetrahydropteridine + NADP(+) = 6,7-dihydropteridine + NADPH + H(+). Its function is as follows. Catalyzes the conversion of quinonoid dihydrobiopterin into tetrahydrobiopterin. This is Dihydropteridine reductase (Qdpr) from Rattus norvegicus (Rat).